Here is a 729-residue protein sequence, read N- to C-terminus: Oligopeptide transporter 4 (729 aa).

Alanine 2 is modified (N-acetylalanine). Phosphoserine is present on serine 8. The next 16 helical transmembrane spans lie at 37–57, 61–81, 123–143, 148–168, 177–194, 207–227, 256–276, 279–299, 352–372, 410–430, 438–458, 522–542, 592–612, 621–637, 640–660, and 673–693; these read MWFL…FFSY, PLVI…HFLA, AFGS…AFYG, FIAG…WAGL, AHMW…FRAL, FFVI…YLFT, GLGA…SPLI, FFAI…VLPL, LSMF…STLT, WWFY…CVFL, WWGL…ISII, FLVQ…VAWW, YAAM…VWSL, WIPL…TAMM, ATAV…LFVF, and VLSA…YFSV.

The protein belongs to the oligopeptide OPT transporter (TC 2.A.67.1) family. In terms of tissue distribution, expressed in flowers, leaves, roots, and stems.

Its subcellular location is the membrane. Functionally, involved in the translocation of tetra- and pentapeptides across the cellular membrane in an energy-dependent manner. The chain is Oligopeptide transporter 4 (OPT4) from Arabidopsis thaliana (Mouse-ear cress).